The primary structure comprises 267 residues: Hydroxyethylthiazole kinase (267 aa).

Methionine 48 is a binding site for substrate. ATP-binding residues include arginine 124 and serine 170. Position 197 (glycine 197) interacts with substrate.

The protein belongs to the Thz kinase family. It depends on Mg(2+) as a cofactor.

It carries out the reaction 5-(2-hydroxyethyl)-4-methylthiazole + ATP = 4-methyl-5-(2-phosphooxyethyl)-thiazole + ADP + H(+). It functions in the pathway cofactor biosynthesis; thiamine diphosphate biosynthesis; 4-methyl-5-(2-phosphoethyl)-thiazole from 5-(2-hydroxyethyl)-4-methylthiazole: step 1/1. Functionally, catalyzes the phosphorylation of the hydroxyl group of 4-methyl-5-beta-hydroxyethylthiazole (THZ). The polypeptide is Hydroxyethylthiazole kinase (Aliivibrio fischeri (strain ATCC 700601 / ES114) (Vibrio fischeri)).